Here is a 294-residue protein sequence, read N- to C-terminus: ATP phosphoribosyltransferase (294 aa).

The protein belongs to the ATP phosphoribosyltransferase family. Long subfamily. Mg(2+) is required as a cofactor.

It localises to the cytoplasm. The enzyme catalyses 1-(5-phospho-beta-D-ribosyl)-ATP + diphosphate = 5-phospho-alpha-D-ribose 1-diphosphate + ATP. The protein operates within amino-acid biosynthesis; L-histidine biosynthesis; L-histidine from 5-phospho-alpha-D-ribose 1-diphosphate: step 1/9. Its activity is regulated as follows. Feedback inhibited by histidine. Catalyzes the condensation of ATP and 5-phosphoribose 1-diphosphate to form N'-(5'-phosphoribosyl)-ATP (PR-ATP). Has a crucial role in the pathway because the rate of histidine biosynthesis seems to be controlled primarily by regulation of HisG enzymatic activity. The chain is ATP phosphoribosyltransferase from Chlorobium phaeobacteroides (strain DSM 266 / SMG 266 / 2430).